The sequence spans 717 residues: MAGKRENFVRVDDLDSRLPSSSVAFQQNYASNFSGQLHPIHASNETSRSFKKGIQKGSKGLKSIGRSLGFGVYRAVFPEDLKVSEKKIFDPQDKFLLYCNKLFVASCILSVFVDPFFFYLPVINAESKCLGIDRKLAITASTLRTFIDVFYLAHMALQLRTAYIAPSSRVFGRGELVIDPAQIAKRYLQRWFIIDFLSVLPLPQIVVWRFLQSSNGSDVLATKQALLFIVLVQYIPRFLRVLPLTSELKRTAGVFAETAWAGAAYYLLLYMLASHIVGAFWYLLALERNDACWQEACIDAGNCSTDFLYCGNQNMDGYAVWNRAKESVLKSKCRADLDDNNPPFDFGIYTQALSSGIVSSQNFIVKYCYCLWWGLQNLSTLGQGLETSTYPMEIIFSISLAISGLILFALLIGNMQTYLQSLTIRLEEMRVKRRDSEQWMHHRMLPQDLRERVRRYDQYKWLETRGVDEEYLVQNLPKDLRRDIKRHLCLALVRRVPLFKSMDDKLLDAICMRLKPCLFTESTYLVREGDPVDEMLFIIRGRLESVTTDGGRSGFFNRSLLKEGEFCGEELLTWALDPKSGVNLPSSTRTVKALTEVEAFALTSEELKFVASQFRRLHSRQVQHTFRFYSHQWRTWAACFIQAAWRRYCKRKKMEEAEAEAAAVSSSTAGPSYSIGAAFLATKFAANALRTIHRNRNTKIRDLVKLQKPPEPDFTAD.

The Cytoplasmic portion of the chain corresponds to 1–102 (MAGKRENFVR…DKFLLYCNKL (102 aa)). A helical transmembrane segment spans residues 103 to 123 (FVASCILSVFVDPFFFYLPVI). Residues 124 to 136 (NAESKCLGIDRKL) lie on the Extracellular side of the membrane. The chain crosses the membrane as a helical span at residues 137–157 (AITASTLRTFIDVFYLAHMAL). At 158–190 (QLRTAYIAPSSRVFGRGELVIDPAQIAKRYLQR) the chain is on the cytoplasmic side. A helical membrane pass occupies residues 191 to 211 (WFIIDFLSVLPLPQIVVWRFL). Over 212–224 (QSSNGSDVLATKQ) the chain is Extracellular. A helical membrane pass occupies residues 225–245 (ALLFIVLVQYIPRFLRVLPLT). At 246–265 (SELKRTAGVFAETAWAGAAY) the chain is on the cytoplasmic side. Residues 266-286 (YLLLYMLASHIVGAFWYLLAL) traverse the membrane as a helical segment. Residues 287–391 (ERNDACWQEA…GQGLETSTYP (105 aa)) lie on the Extracellular side of the membrane. Residues 392 to 412 (MEIIFSISLAISGLILFALLI) traverse the membrane as a helical segment. At 413-717 (GNMQTYLQSL…KPPEPDFTAD (305 aa)) the chain is on the cytoplasmic side. A nucleoside 3',5'-cyclic phosphate contacts are provided by residues 498-628 (LFKS…TFRF) and E569. Positions 614–629 (FRRLHSRQVQHTFRFY) are calmodulin-binding. Residues 634–663 (RTWAACFIQAAWRRYCKRKKMEEAEAEAAA) enclose the IQ domain.

This sequence belongs to the cyclic nucleotide-gated cation channel (TC 1.A.1.5) family. As to quaternary structure, homotetramer or heterotetramer.

Its subcellular location is the cell membrane. Its function is as follows. Probable cyclic nucleotide-gated ion channel. This Arabidopsis thaliana (Mouse-ear cress) protein is Probable cyclic nucleotide-gated ion channel 5 (CNGC5).